A 671-amino-acid polypeptide reads, in one-letter code: E3 ubiquitin-protein ligase pub2 (671 aa).

Residues 1-112 form the C2 domain; it reads MENIRFEVQL…KDDYKTRITL (112 aa). The WW domain occupies 242–275; sequence GPLPAGWEMRLSEDYHVYFVDHSTKTTTWSDPRD. The HECT domain occupies 338 to 671; sequence SVSDMKKKLL…IQETAGFGTE (334 aa). The active-site Glycyl thioester intermediate is Cys-639.

In terms of assembly, interacts with the E2 ubiquitin-conjugating enzyme ubc4.

It is found in the membrane. The protein resides in the cytoplasm. It catalyses the reaction S-ubiquitinyl-[E2 ubiquitin-conjugating enzyme]-L-cysteine + [acceptor protein]-L-lysine = [E2 ubiquitin-conjugating enzyme]-L-cysteine + N(6)-ubiquitinyl-[acceptor protein]-L-lysine.. The protein operates within protein modification; protein ubiquitination. Functionally, E3 ubiquitin-protein ligase which accepts ubiquitin from an E2 ubiquitin-conjugating enzyme in the form of a thioester and then directly transfers the ubiquitin to targeted substrates. In Schizosaccharomyces pombe (strain 972 / ATCC 24843) (Fission yeast), this protein is E3 ubiquitin-protein ligase pub2 (pub2).